Here is a 761-residue protein sequence, read N- to C-terminus: Xaa-Pro dipeptidyl-peptidase (761 aa).

Active-site charge relay system residues include Ser349, Asp469, and His499.

It belongs to the peptidase S15 family. Homodimer.

The protein localises to the cytoplasm. The enzyme catalyses Hydrolyzes Xaa-Pro-|- bonds to release unblocked, N-terminal dipeptides from substrates including Ala-Pro-|-p-nitroanilide and (sequentially) Tyr-Pro-|-Phe-Pro-|-Gly-Pro-|-Ile.. Removes N-terminal dipeptides sequentially from polypeptides having unsubstituted N-termini provided that the penultimate residue is proline. This is Xaa-Pro dipeptidyl-peptidase from Streptococcus equi subsp. equi (strain 4047).